Here is a 132-residue protein sequence, read N- to C-terminus: Phosphoribosyl-AMP cyclohydrolase (132 aa).

Asp-79 contacts Mg(2+). Cys-80 contacts Zn(2+). Mg(2+) is bound by residues Asp-81 and Asp-83. Zn(2+) contacts are provided by Cys-100 and Cys-107.

The protein belongs to the PRA-CH family. In terms of assembly, homodimer. Mg(2+) serves as cofactor. Zn(2+) is required as a cofactor.

Its subcellular location is the cytoplasm. The catalysed reaction is 1-(5-phospho-beta-D-ribosyl)-5'-AMP + H2O = 1-(5-phospho-beta-D-ribosyl)-5-[(5-phospho-beta-D-ribosylamino)methylideneamino]imidazole-4-carboxamide. Its pathway is amino-acid biosynthesis; L-histidine biosynthesis; L-histidine from 5-phospho-alpha-D-ribose 1-diphosphate: step 3/9. In terms of biological role, catalyzes the hydrolysis of the adenine ring of phosphoribosyl-AMP. The protein is Phosphoribosyl-AMP cyclohydrolase of Acidovorax sp. (strain JS42).